The following is a 106-amino-acid chain: MIVTTTPNIEGKRIVRYCGVIAGEAILGANIFKDLSAGIRDIVGGRSGTYERELEKARAIALEELQQHAVALGANAVVGIDLDYETFGKANGMLMVSVSGTAVVVE.

This sequence belongs to the UPF0145 family.

This is UPF0145 protein VC_A0951 from Vibrio cholerae serotype O1 (strain ATCC 39315 / El Tor Inaba N16961).